An 896-amino-acid chain; its full sequence is Valine--tRNA ligase (896 aa).

The 'HIGH' region signature appears at 48–58; it reads PNVTGSLHMGH. Positions 543 to 547 match the 'KMSKS' region motif; it reads KMSKS. ATP is bound at residue lysine 546. Positions 830 to 896 form a coiled coil; that stretch reads VIDLDAERTR…ARLGAALERL (67 aa).

Belongs to the class-I aminoacyl-tRNA synthetase family. ValS type 1 subfamily. Monomer.

Its subcellular location is the cytoplasm. It carries out the reaction tRNA(Val) + L-valine + ATP = L-valyl-tRNA(Val) + AMP + diphosphate. Its function is as follows. Catalyzes the attachment of valine to tRNA(Val). As ValRS can inadvertently accommodate and process structurally similar amino acids such as threonine, to avoid such errors, it has a 'posttransfer' editing activity that hydrolyzes mischarged Thr-tRNA(Val) in a tRNA-dependent manner. This is Valine--tRNA ligase from Granulibacter bethesdensis (strain ATCC BAA-1260 / CGDNIH1).